The sequence spans 370 residues: Chorismate synthase (370 aa).

Arginine 47 contributes to the NADP(+) binding site. Residues 124-126, glycine 286, 301-305, and arginine 327 contribute to the FMN site; these read RSS and KPTAT.

The protein belongs to the chorismate synthase family. Homotetramer. FMNH2 serves as cofactor.

The catalysed reaction is 5-O-(1-carboxyvinyl)-3-phosphoshikimate = chorismate + phosphate. It participates in metabolic intermediate biosynthesis; chorismate biosynthesis; chorismate from D-erythrose 4-phosphate and phosphoenolpyruvate: step 7/7. Functionally, catalyzes the anti-1,4-elimination of the C-3 phosphate and the C-6 proR hydrogen from 5-enolpyruvylshikimate-3-phosphate (EPSP) to yield chorismate, which is the branch point compound that serves as the starting substrate for the three terminal pathways of aromatic amino acid biosynthesis. This reaction introduces a second double bond into the aromatic ring system. This is Chorismate synthase from Trichodesmium erythraeum (strain IMS101).